The following is a 97-amino-acid chain: Putative pterin-4-alpha-carbinolamine dehydratase (97 aa).

Belongs to the pterin-4-alpha-carbinolamine dehydratase family.

It carries out the reaction (4aS,6R)-4a-hydroxy-L-erythro-5,6,7,8-tetrahydrobiopterin = (6R)-L-erythro-6,7-dihydrobiopterin + H2O. This is Putative pterin-4-alpha-carbinolamine dehydratase from Opitutus terrae (strain DSM 11246 / JCM 15787 / PB90-1).